We begin with the raw amino-acid sequence, 798 residues long: Peroxisome proliferator-activated receptor gamma coactivator 1-alpha (798 aa).

Lys-79 is modified (N6-acetyllysine). A disordered region spans residues Pro-100–Glu-140. The span at Asp-116 to Pro-129 shows a compositional bias: polar residues. The LXXLL motif signature appears at Leu-144 to Leu-148. Residue Lys-146 is modified to N6-acetyllysine. Thr-178 carries the post-translational modification Phosphothreonine; by AMPK. An N6-acetyllysine modification is found at Lys-184. A disordered region spans residues Tyr-213–Asn-277. The segment covering Asp-219–Thr-237 has biased composition (basic and acidic residues). Residues Lys-254, Lys-271, Lys-278, and Lys-321 each carry the N6-acetyllysine modification. The disordered stretch occupies residues Gly-290–Gln-351. The tract at residues Gly-293–Thr-339 is interaction with PPARG. The span at Ser-334–Lys-346 shows a compositional bias: polar residues. N6-acetyllysine occurs at positions 347, 413, 442, and 451. Residues Glu-350–Arg-798 form a mediates interaction with RNF34 region. At Ser-539 the chain carries Phosphoserine; by AMPK. Disordered regions lie at residues Ser-542–Ser-599, His-613–Glu-639, and Tyr-650–Arg-669. Positions Gln-563–Cys-578 are enriched in basic residues. Positions Ser-579–Ser-599 are enriched in low complexity. The span at Ser-622 to Arg-631 shows a compositional bias: basic residues. Positions Arg-677 to Arg-753 constitute an RRM domain. N6-acetyllysine occurs at positions 758 and 779.

As to quaternary structure, homooligomer. Interacts with MYBBP1A; inhibits MYBBP1A transcriptional activation. Interacts with PRDM16, LPIN1 and PML. Interacts (via LXXLL motif) with RORA and RORC (via AF-2 motif); activates RORA and RORC transcriptional activation. Interacts with LRPPRC. Interacts with FOXO1. Interacts with NR5A2. Post-translationally, phosphorylation by AMPK in skeletal muscle increases activation of its own promoter. Phosphorylated by CLK2. Heavily acetylated by KAT2A/GCN5 under conditions of high nutrients, leading to inactivation of PPARGC1A. Deacetylated by SIRT1 in low nutrients/high NAD conditions, leading to its activation. In terms of processing, ubiquitinated. Ubiquitination by RNF34 induces proteasomal degradation. In terms of tissue distribution, heart, skeletal muscle, liver and kidney. Expressed at lower levels in brain and pancreas and at very low levels in the intestine and white adipose tissue. In skeletal muscle, levels were lower in obese than in lean subjects and fasting induced a 2-fold increase in levels in the skeletal muscle in obese subjects.

The protein resides in the nucleus. It is found in the PML body. The protein localises to the cytoplasm. Functionally, transcriptional coactivator for steroid receptors and nuclear receptors. Greatly increases the transcriptional activity of PPARG and thyroid hormone receptor on the uncoupling protein promoter. Can regulate key mitochondrial genes that contribute to the program of adaptive thermogenesis. Plays an essential role in metabolic reprogramming in response to dietary availability through coordination of the expression of a wide array of genes involved in glucose and fatty acid metabolism. Acts as a key regulator of gluconeogenesis: stimulates hepatic gluconeogenesis by increasing the expression of gluconeogenic enzymes, and acting together with FOXO1 to promote the fasting gluconeogenic program. Induces the expression of PERM1 in the skeletal muscle in an ESRRA-dependent manner. Also involved in the integration of the circadian rhythms and energy metabolism. Required for oscillatory expression of clock genes, such as BMAL1 and NR1D1, through the coactivation of RORA and RORC, and metabolic genes, such as PDK4 and PEPCK. The chain is Peroxisome proliferator-activated receptor gamma coactivator 1-alpha (PPARGC1A) from Homo sapiens (Human).